The following is a 655-amino-acid chain: p-hydroxybenzoic acid efflux pump subunit AaeB (655 aa).

11 helical membrane passes run 13-33 (FAVK…HFQL), 38-58 (WAVL…GGEP), 69-89 (LRII…IAMI), 93-113 (LLMI…SSLV), 121-141 (WGLA…EPLL), 152-172 (EIVI…PRSI), 370-390 (LFWL…IAVV), 407-427 (FIYG…VIIP), 431-451 (QSML…GIEV), 459-479 (MGAL…TFHF), and 482-502 (FLDS…VILL).

It belongs to the aromatic acid exporter ArAE (TC 2.A.85) family.

Its subcellular location is the cell inner membrane. Its function is as follows. Forms an efflux pump with AaeA. Could function as a metabolic relief valve, allowing to eliminate certain compounds when they accumulate to high levels in the cell. The polypeptide is p-hydroxybenzoic acid efflux pump subunit AaeB (Shigella boydii serotype 18 (strain CDC 3083-94 / BS512)).